The sequence spans 885 residues: Lon protease homolog 2, peroxisomal (885 aa).

The 245-residue stretch at 12–256 (LAVLPFRNKV…KATELVDRHL (245 aa)) folds into the Lon N-terminal domain. Residues 70–104 (LLSPGVGSDSGEGGSKVGGSAVESSKQDTKNGKEP) are disordered. The span at 77–86 (SDSGEGGSKV) shows a compositional bias: gly residues. The span at 94-104 (SKQDTKNGKEP) shows a compositional bias: basic and acidic residues. Residue 409-416 (GPPGVGKT) participates in ATP binding. The 186-residue stretch at 690–875 (VASPGVSVGL…EEVLDHAFEG (186 aa)) folds into the Lon proteolytic domain. Catalysis depends on residues Ser781 and Lys824. The Microbody targeting signal signature appears at 883 to 885 (SKL).

It belongs to the peptidase S16 family.

It localises to the peroxisome matrix. The catalysed reaction is Hydrolysis of proteins in presence of ATP.. Its function is as follows. ATP-dependent serine protease that mediates the selective degradation of misfolded and unassembled polypeptides in the peroxisomal matrix. Necessary for type 2 peroxisome targeting signal (PTS2)-containing protein processing and facilitates peroxisome matrix protein import. The protein is Lon protease homolog 2, peroxisomal (LON1) of Zea mays (Maize).